A 302-amino-acid polypeptide reads, in one-letter code: Nudix hydrolase 22, chloroplastic (302 aa).

The transit peptide at 1–25 (MKSGASAASPTAKSFNFGSSRLLAL) directs the protein to the chloroplast. A Nudix hydrolase domain is found at 73–229 (PKKAAVLICL…DSDYVIWGLT (157 aa)). Positions 114 to 135 (KAEEHDKDDGITATREAEEEIG) match the Nudix box motif. E129 and E133 together coordinate Mg(2+).

This sequence belongs to the Nudix hydrolase family. Mg(2+) serves as cofactor. It depends on Mn(2+) as a cofactor. In terms of tissue distribution, expressed in roots, leaves, stems and inflorescences.

Its subcellular location is the plastid. It is found in the chloroplast. Functionally, probably mediates the hydrolysis of some nucleoside diphosphate derivatives. The polypeptide is Nudix hydrolase 22, chloroplastic (NUDT22) (Arabidopsis thaliana (Mouse-ear cress)).